We begin with the raw amino-acid sequence, 143 residues long: D-aminoacyl-tRNA deacylase (143 aa).

The Gly-cisPro motif, important for rejection of L-amino acids signature appears at Gly-135–Pro-136.

This sequence belongs to the DTD family. Homodimer.

It is found in the cytoplasm. It carries out the reaction glycyl-tRNA(Ala) + H2O = tRNA(Ala) + glycine + H(+). The enzyme catalyses a D-aminoacyl-tRNA + H2O = a tRNA + a D-alpha-amino acid + H(+). An aminoacyl-tRNA editing enzyme that deacylates mischarged D-aminoacyl-tRNAs. Also deacylates mischarged glycyl-tRNA(Ala), protecting cells against glycine mischarging by AlaRS. Acts via tRNA-based rather than protein-based catalysis; rejects L-amino acids rather than detecting D-amino acids in the active site. By recycling D-aminoacyl-tRNA to D-amino acids and free tRNA molecules, this enzyme counteracts the toxicity associated with the formation of D-aminoacyl-tRNA entities in vivo and helps enforce protein L-homochirality. The polypeptide is D-aminoacyl-tRNA deacylase (Mycobacterium bovis (strain BCG / Pasteur 1173P2)).